The following is a 238-amino-acid chain: TIDTCSSDSPLSCQTDNEASCCFNSPGGSLLQTQFWDYDPSDGPSDSWTIHGLWPDNCDGSYQEYCDDSREYSNITSILEAQDRTELLSYMKEYWPDYEGADEDESFWEHEWNKHGTCINTIDPSCYTDYYAQEEVGDFFQQVVDLFKTLDSYTALSDAGITPSEDATYKLSDIEDALAAIHDGYPPYVGCEDGALSQLYYYFNVKGSAIGGTYVASERLEDSNCKGSGIKYPPKSSS.

Cystine bridges form between Cys5–Cys22, Cys13–Cys58, Cys21–Cys126, Cys66–Cys118, and Cys191–Cys225. His51 is an active-site residue. An N-linked (GlcNAc...) asparagine glycan is attached at Asn74. Residues Glu111 and His115 contribute to the active site.

It belongs to the RNase T2 family.

It carries out the reaction a ribonucleotidyl-ribonucleotide-RNA + H2O = a 3'-end 3'-phospho-ribonucleotide-RNA + a 5'-end dephospho-ribonucleoside-RNA + H(+). This is a base non-specific and adenylic acid preferential ribonuclease. The polypeptide is Ribonuclease M (Aspergillus phoenicis (Aspergillus saitoi)).